Consider the following 267-residue polypeptide: Tryptophan synthase alpha chain (267 aa).

Catalysis depends on proton acceptor residues E49 and D60.

The protein belongs to the TrpA family. In terms of assembly, tetramer of two alpha and two beta chains.

It catalyses the reaction (1S,2R)-1-C-(indol-3-yl)glycerol 3-phosphate + L-serine = D-glyceraldehyde 3-phosphate + L-tryptophan + H2O. Its pathway is amino-acid biosynthesis; L-tryptophan biosynthesis; L-tryptophan from chorismate: step 5/5. Functionally, the alpha subunit is responsible for the aldol cleavage of indoleglycerol phosphate to indole and glyceraldehyde 3-phosphate. This Acinetobacter baumannii (strain AB307-0294) protein is Tryptophan synthase alpha chain.